Consider the following 1213-residue polypeptide: DNA-directed RNA polymerase subunit beta' (1213 aa).

Residues cysteine 60, cysteine 62, cysteine 75, and cysteine 78 each coordinate Zn(2+). 3 residues coordinate Mg(2+): aspartate 450, aspartate 452, and aspartate 454. Zn(2+)-binding residues include cysteine 819, cysteine 893, cysteine 900, and cysteine 903.

Belongs to the RNA polymerase beta' chain family. As to quaternary structure, the RNAP catalytic core consists of 2 alpha, 1 beta, 1 beta' and 1 omega subunit. When a sigma factor is associated with the core the holoenzyme is formed, which can initiate transcription. Requires Mg(2+) as cofactor. Zn(2+) serves as cofactor.

The enzyme catalyses RNA(n) + a ribonucleoside 5'-triphosphate = RNA(n+1) + diphosphate. In terms of biological role, DNA-dependent RNA polymerase catalyzes the transcription of DNA into RNA using the four ribonucleoside triphosphates as substrates. In Streptococcus pyogenes serotype M28 (strain MGAS6180), this protein is DNA-directed RNA polymerase subunit beta'.